Consider the following 262-residue polypeptide: Thiazole synthase (262 aa).

K96 serves as the catalytic Schiff-base intermediate with DXP. Residues G157, 184–185 (AG), and 206–207 (NT) each bind 1-deoxy-D-xylulose 5-phosphate.

It belongs to the ThiG family. Homotetramer. Forms heterodimers with either ThiH or ThiS.

The protein localises to the cytoplasm. It carries out the reaction [ThiS sulfur-carrier protein]-C-terminal-Gly-aminoethanethioate + 2-iminoacetate + 1-deoxy-D-xylulose 5-phosphate = [ThiS sulfur-carrier protein]-C-terminal Gly-Gly + 2-[(2R,5Z)-2-carboxy-4-methylthiazol-5(2H)-ylidene]ethyl phosphate + 2 H2O + H(+). It functions in the pathway cofactor biosynthesis; thiamine diphosphate biosynthesis. Catalyzes the rearrangement of 1-deoxy-D-xylulose 5-phosphate (DXP) to produce the thiazole phosphate moiety of thiamine. Sulfur is provided by the thiocarboxylate moiety of the carrier protein ThiS. In vitro, sulfur can be provided by H(2)S. This chain is Thiazole synthase, found in Legionella pneumophila (strain Corby).